The primary structure comprises 213 residues: Nicotinate-nucleotide adenylyltransferase (213 aa).

Belongs to the NadD family.

The catalysed reaction is nicotinate beta-D-ribonucleotide + ATP + H(+) = deamido-NAD(+) + diphosphate. The protein operates within cofactor biosynthesis; NAD(+) biosynthesis; deamido-NAD(+) from nicotinate D-ribonucleotide: step 1/1. Catalyzes the reversible adenylation of nicotinate mononucleotide (NaMN) to nicotinic acid adenine dinucleotide (NaAD). The protein is Nicotinate-nucleotide adenylyltransferase of Salmonella typhimurium (strain LT2 / SGSC1412 / ATCC 700720).